A 241-amino-acid chain; its full sequence is Probable FKBP-type peptidyl-prolyl cis-trans isomerase (241 aa).

In terms of domain architecture, PPIase FKBP-type spans 150-241 (TDTVKVHYTG…VLDVNPKSEK (92 aa)).

Belongs to the FKBP-type PPIase family.

It catalyses the reaction [protein]-peptidylproline (omega=180) = [protein]-peptidylproline (omega=0). PPIases accelerate the folding of proteins. It catalyzes the cis-trans isomerization of proline imidic peptide bonds in oligopeptides. This Haemophilus influenzae (strain ATCC 51907 / DSM 11121 / KW20 / Rd) protein is Probable FKBP-type peptidyl-prolyl cis-trans isomerase.